The sequence spans 870 residues: Ubiquitin-protein ligase E3A (870 aa).

Phosphoserine is present on Ser-8. A C4-type; atypical zinc finger spans residues 42 to 81 (CGNEACTNEFCASCPTFLRMDNNAAAIKALELYKINAKLC). The span at 171–180 (EELKSLQEKD) shows a compositional bias: basic and acidic residues. The interval 171 to 223 (EELKSLQEKDEDKDEDEKEKAACSAAAMEEDSEASSSRMGDSSQGDNNVQKLG) is disordered. Over residues 208 to 220 (RMGDSSQGDNNVQ) the composition is skewed to polar residues. The residue at position 213 (Ser-213) is a Phosphoserine. An HECT domain is found at 542 to 870 (NPADLKKQLY…ITYAKGFGML (329 aa)). Position 654 is a phosphotyrosine; by ABL1 (Tyr-654). Cys-838 acts as the Glycyl thioester intermediate in catalysis.

As to quaternary structure, the active form is probably a homotrimer. Binds UBQLN1 and UBQLN2. Interacts with the 26S proteasome. Interacts with BPY2. Interacts with HIF1AN, MAPK6 and NEURL4; interaction with MAPK6 may be mediated by NEURL4. Interacts with the proteasomal subunit PSMD4. Interacts with BMAL1. Interacts with ARC. Interacts with ESR1 and WBP2. In terms of processing, phosphorylation at Tyr-654 by ABL1 impairs E3 ligase activity. As to expression, widely expressed. Most abundant in brain, heart and thymus.

The protein localises to the cytoplasm. It is found in the nucleus. The enzyme catalyses S-ubiquitinyl-[E2 ubiquitin-conjugating enzyme]-L-cysteine + [acceptor protein]-L-lysine = [E2 ubiquitin-conjugating enzyme]-L-cysteine + N(6)-ubiquitinyl-[acceptor protein]-L-lysine.. Its pathway is protein modification; protein ubiquitination. In terms of biological role, E3 ubiquitin-protein ligase which accepts ubiquitin from an E2 ubiquitin-conjugating enzyme in the form of a thioester and transfers it to its substrates. Several substrates have been identified including the BMAL1, ARC, LAMTOR1, RAD23A and RAD23B, MCM7 (which is involved in DNA replication), annexin A1, the PML tumor suppressor, and the cell cycle regulator CDKN1B. Additionally, may function as a cellular quality control ubiquitin ligase by helping the degradation of the cytoplasmic misfolded proteins. Finally, UBE3A also promotes its own degradation in vivo. Plays an important role in the regulation of the circadian clock: involved in the ubiquitination of the core clock component BMAL1, leading to its proteasomal degradation. Acts as a regulator of synaptic development by mediating ubiquitination and degradation of ARC. Required for synaptic remodeling in neurons by mediating ubiquitination and degradation of LAMTOR1, thereby limiting mTORC1 signaling and activity-dependent synaptic remodeling. Synergizes with WBP2 in enhancing PGR activity. This is Ubiquitin-protein ligase E3A from Mus musculus (Mouse).